The primary structure comprises 568 residues: Proline--tRNA ligase (568 aa).

The protein belongs to the class-II aminoacyl-tRNA synthetase family. ProS type 1 subfamily. As to quaternary structure, homodimer.

It is found in the cytoplasm. It catalyses the reaction tRNA(Pro) + L-proline + ATP = L-prolyl-tRNA(Pro) + AMP + diphosphate. Functionally, catalyzes the attachment of proline to tRNA(Pro) in a two-step reaction: proline is first activated by ATP to form Pro-AMP and then transferred to the acceptor end of tRNA(Pro). As ProRS can inadvertently accommodate and process non-cognate amino acids such as alanine and cysteine, to avoid such errors it has two additional distinct editing activities against alanine. One activity is designated as 'pretransfer' editing and involves the tRNA(Pro)-independent hydrolysis of activated Ala-AMP. The other activity is designated 'posttransfer' editing and involves deacylation of mischarged Ala-tRNA(Pro). The misacylated Cys-tRNA(Pro) is not edited by ProRS. The protein is Proline--tRNA ligase of Campylobacter jejuni subsp. jejuni serotype O:6 (strain 81116 / NCTC 11828).